The sequence spans 252 residues: MSGHNKWANIKHRKMAQDAKKSKIFTKIIRELMVAAREGGTDPNTNNALRAAIERAKAANMPKDTMEKAIKKGAGELEGQSFVEALYEVYAPGGVAMLIRALTDNKNRTAQEIRHLLSKHGGNMAESGSVAWMFERKGVITVPRSEISDMDEFQLLAIDAGAEDIQDEEDPVRIITAPEEASNVKNALEENGYTASYELTYIPKNTVSVSGNDAEKLLKLLNVLEDNDDVQEVYANFEMDDSEMEALMEKMQ.

The protein belongs to the TACO1 family.

It is found in the cytoplasm. The protein is Probable transcriptional regulatory protein Kole_1935 of Kosmotoga olearia (strain ATCC BAA-1733 / DSM 21960 / TBF 19.5.1).